The sequence spans 309 residues: uncharacterized protein (309 aa).

One can recognise an RPE1 insert domain in the interval 9–55 (NFLYNIANKDGFKGYKECRTSAYKNVFDDSSTKSTSKFHLGISDTKN). The helical transmembrane segment at 62–82 (IIGLILIIFAGVLFYAYILQH) threads the bilayer.

It belongs to the LicD transferase family.

It localises to the membrane. This is an uncharacterized protein from Rickettsia typhi (strain ATCC VR-144 / Wilmington).